The sequence spans 310 residues: Epoxyqueuosine reductase (310 aa).

Catalysis depends on Asp-133, which acts as the Proton donor. A 4Fe-4S ferredoxin-type domain is found at 179 to 208 (YDNPSDKDYCGTCTRCVDACPTDAILQDNL). [4Fe-4S] cluster-binding residues include Cys-188, Cys-191, Cys-194, Cys-198, Cys-214, Cys-241, Cys-244, and Cys-248.

It belongs to the QueG family. In terms of assembly, monomer. Requires cob(II)alamin as cofactor. The cofactor is [4Fe-4S] cluster.

Its subcellular location is the cytoplasm. It catalyses the reaction epoxyqueuosine(34) in tRNA + AH2 = queuosine(34) in tRNA + A + H2O. It participates in tRNA modification; tRNA-queuosine biosynthesis. Functionally, catalyzes the conversion of epoxyqueuosine (oQ) to queuosine (Q), which is a hypermodified base found in the wobble positions of tRNA(Asp), tRNA(Asn), tRNA(His) and tRNA(Tyr). In Cyclobacterium marinum (strain ATCC 25205 / DSM 745 / LMG 13164 / NCIMB 1802) (Flectobacillus marinus), this protein is Epoxyqueuosine reductase.